A 465-amino-acid chain; its full sequence is MTIHIYNTLTRQKEEFIPLEENKVKMYVCGPTVYNYIHIGNARPPMVFDTVRRYLEYKGYDVQYVSNFTDVDDKLIKAANELGEDVPTIADRFVEAYFEDVTALGCKHATVHPRVTENMDIIIEFIQELVNKGYAYESEGDVYFRTKEFEGYGKLSHQPIADLRHGARIEVGEKKQDPLDFALWKAAKEGEIFWESPWGQGRPGWHIECSAMARKYLGDTIDIHAGGQDLAFPHHENEIAQSEALTGKTFARYWMHNGYININNEKMSKSLGNFILVHDIIKQYDPQLIRFFMLSVHYRHPINFSEELLQSTNNGLERIKTAYGNLKHRMESSTDLTDHNEKWLADLEKFQTAFEEAMNDDFNTANAITELYNVANHANQYLLEEHTSTVVIQAYVKQLETLFDILGLELAQEELLDEEIEALIQKRIEARKNRDFALSDQIRDDLKDRNIILEDTAQGTRWKRG.

C29 contributes to the Zn(2+) binding site. The 'HIGH' region motif lies at 31-41 (PTVYNYIHIGN). C209, H234, and E238 together coordinate Zn(2+). Positions 266–270 (KMSKS) match the 'KMSKS' region motif. Residue K269 participates in ATP binding. At S270 the chain carries Phosphoserine.

Belongs to the class-I aminoacyl-tRNA synthetase family. In terms of assembly, monomer. Requires Zn(2+) as cofactor.

The protein resides in the cytoplasm. It carries out the reaction tRNA(Cys) + L-cysteine + ATP = L-cysteinyl-tRNA(Cys) + AMP + diphosphate. This is Cysteine--tRNA ligase from Bacillus cereus (strain ATCC 10987 / NRS 248).